The following is a 330-amino-acid chain: Aspartate--ammonia ligase (330 aa).

This sequence belongs to the class-II aminoacyl-tRNA synthetase family. AsnA subfamily.

The protein localises to the cytoplasm. It carries out the reaction L-aspartate + NH4(+) + ATP = L-asparagine + AMP + diphosphate + H(+). It functions in the pathway amino-acid biosynthesis; L-asparagine biosynthesis; L-asparagine from L-aspartate (ammonia route): step 1/1. The chain is Aspartate--ammonia ligase from Klebsiella pneumoniae (strain 342).